The chain runs to 290 residues: 4-hydroxybenzoate octaprenyltransferase (290 aa).

Transmembrane regions (helical) follow at residues 23–43 (IGAL…TPGM), 46–66 (LWIL…GCVV), 99–119 (LFVV…AMTI), 141–161 (LPQV…FAAV), 163–183 (ESLP…AVAY), 212–232 (TLII…IGWL), 233–253 (NGLG…FVYQ), and 268–288 (AFMN…MSYW).

The protein belongs to the UbiA prenyltransferase family. The cofactor is Mg(2+).

It localises to the cell inner membrane. The enzyme catalyses all-trans-octaprenyl diphosphate + 4-hydroxybenzoate = 4-hydroxy-3-(all-trans-octaprenyl)benzoate + diphosphate. Its pathway is cofactor biosynthesis; ubiquinone biosynthesis. In terms of biological role, catalyzes the prenylation of para-hydroxybenzoate (PHB) with an all-trans polyprenyl group. Mediates the second step in the final reaction sequence of ubiquinone-8 (UQ-8) biosynthesis, which is the condensation of the polyisoprenoid side chain with PHB, generating the first membrane-bound Q intermediate 3-octaprenyl-4-hydroxybenzoate. The sequence is that of 4-hydroxybenzoate octaprenyltransferase from Salmonella paratyphi C (strain RKS4594).